The following is a 142-amino-acid chain: ATP synthase epsilon chain (142 aa).

It belongs to the ATPase epsilon chain family. As to quaternary structure, F-type ATPases have 2 components, CF(1) - the catalytic core - and CF(0) - the membrane proton channel. CF(1) has five subunits: alpha(3), beta(3), gamma(1), delta(1), epsilon(1). CF(0) has three main subunits: a, b and c.

It is found in the cell inner membrane. Functionally, produces ATP from ADP in the presence of a proton gradient across the membrane. The chain is ATP synthase epsilon chain from Koribacter versatilis (strain Ellin345).